Here is a 291-residue protein sequence, read N- to C-terminus: MDKIIKSISTSGSFRAYVLDCTETVRTAQEKHQTLSSSTVALGRTLIANQILAANQKGNSKVTVKVIGDSSFGHIISVADTKGNVKGYIQNTGVDIKKTATGEVLVGPFMGNGHFVVITDYGTGQPYTSTTPLITGEIGEDFAYYLTESEQTPSAVGLNVLLDDEDKVKVAGGFMLQVLPGASDEEISRYEKRIQEMPSISSLLESENHIESLLSAIYGEDDYKRLSEDSLAFYCDCSKERFEAALLTLGTKELQAMKDEDKGVEITCQFCNQTYYFTEEDLEKIINDSIK.

Cystine bridges form between C235–C237 and C268–C271.

The protein belongs to the HSP33 family. Under oxidizing conditions two disulfide bonds are formed involving the reactive cysteines. Under reducing conditions zinc is bound to the reactive cysteines and the protein is inactive.

The protein localises to the cytoplasm. Functionally, redox regulated molecular chaperone. Protects both thermally unfolding and oxidatively damaged proteins from irreversible aggregation. Plays an important role in the bacterial defense system toward oxidative stress. The protein is 33 kDa chaperonin of Streptococcus agalactiae serotype Ia (strain ATCC 27591 / A909 / CDC SS700).